We begin with the raw amino-acid sequence, 450 residues long: tRNA modification GTPase MnmE (450 aa).

The (6S)-5-formyl-5,6,7,8-tetrahydrofolate site is built by Arg-20, Glu-78, and Lys-117. Residues 211-372 (GFRMVIVGKP…LEEAIYRETQ (162 aa)) enclose the TrmE-type G domain. A K(+)-binding site is contributed by Asn-221. GTP-binding positions include 221–226 (NVGKST), 240–246 (TDIPGTT), and 265–268 (DTAG). Ser-225 provides a ligand contact to Mg(2+). Thr-240, Ile-242, and Thr-245 together coordinate K(+). Thr-246 is a binding site for Mg(2+). Lys-450 provides a ligand contact to (6S)-5-formyl-5,6,7,8-tetrahydrofolate.

The protein belongs to the TRAFAC class TrmE-Era-EngA-EngB-Septin-like GTPase superfamily. TrmE GTPase family. Homodimer. Heterotetramer of two MnmE and two MnmG subunits. The cofactor is K(+).

It is found in the cytoplasm. In terms of biological role, exhibits a very high intrinsic GTPase hydrolysis rate. Involved in the addition of a carboxymethylaminomethyl (cmnm) group at the wobble position (U34) of certain tRNAs, forming tRNA-cmnm(5)s(2)U34. The protein is tRNA modification GTPase MnmE of Thermotoga petrophila (strain ATCC BAA-488 / DSM 13995 / JCM 10881 / RKU-1).